The sequence spans 316 residues: Thymidylate synthase (316 aa).

Residues R23 and 178 to 179 (RR) each bind dUMP. The Nucleophile role is filled by C198. DUMP-binding positions include 218–221 (RSGD), N229, and 259–261 (HIY). D221 provides a ligand contact to (6R)-5,10-methylene-5,6,7,8-tetrahydrofolate. Residue A315 participates in (6R)-5,10-methylene-5,6,7,8-tetrahydrofolate binding.

The protein belongs to the thymidylate synthase family. Bacterial-type ThyA subfamily. Homodimer.

The protein resides in the cytoplasm. It catalyses the reaction dUMP + (6R)-5,10-methylene-5,6,7,8-tetrahydrofolate = 7,8-dihydrofolate + dTMP. The protein operates within pyrimidine metabolism; dTTP biosynthesis. Functionally, catalyzes the reductive methylation of 2'-deoxyuridine-5'-monophosphate (dUMP) to 2'-deoxythymidine-5'-monophosphate (dTMP) while utilizing 5,10-methylenetetrahydrofolate (mTHF) as the methyl donor and reductant in the reaction, yielding dihydrofolate (DHF) as a by-product. This enzymatic reaction provides an intracellular de novo source of dTMP, an essential precursor for DNA biosynthesis. In Latilactobacillus sakei subsp. sakei (strain 23K) (Lactobacillus sakei subsp. sakei), this protein is Thymidylate synthase.